The primary structure comprises 359 residues: NF-kappa-B inhibitor beta (359 aa).

2 positions are modified to phosphoserine; by RPS6KA1: S19 and S23. ANK repeat units follow at residues 57–86, 93–122, and 126–155; these read DGDT…GTEY, LGQT…GVLV, and GGHT…SHPR. Residues 153-194 form a disordered region; sequence HPRDASDTYLTQSQDCTPDTSHAPAAVDSQPNPENEEEPRDE. The segment covering 160–172 has biased composition (polar residues); that stretch reads TYLTQSQDCTPDT. ANK repeat units follow at residues 206–235, 240–269, and 273–302; these read DGHT…DLNK, CGRT…DPTA, and GGRT…PEPE. Positions 298-359 are disordered; it reads APEPEDEDDK…KPLPDDPNPA (62 aa). 2 positions are modified to phosphoserine: S313 and S318. A compositionally biased stretch (acidic residues) spans 318–331; the sequence is SDSDNRDEGDEYDD. Over residues 344-359 the composition is skewed to pro residues; the sequence is PPSPASKPLPDDPNPA.

The protein belongs to the NF-kappa-B inhibitor family. In terms of assembly, interacts with THRB (via ligand-binding domain). Interacts with RELA and REL. Interacts with COMMD1. Interacts with inhibitor kappa B-interacting Ras-like NKIRAS1 and NKIRAS2. Phosphorylated by RPS6KA1; followed by degradation. Interaction with NKIRAS1 and NKIRAS2 probably prevents phosphorylation. Highly expressed in testis followed by spleen.

It is found in the cytoplasm. The protein resides in the nucleus. Its function is as follows. Inhibits NF-kappa-B by complexing with and trapping it in the cytoplasm. However, the unphosphorylated form resynthesized after cell stimulation is able to bind NF-kappa-B allowing its transport to the nucleus and protecting it to further NFKBIA-dependent inactivation. Association with inhibitor kappa B-interacting NKIRAS1 and NKIRAS2 prevent its phosphorylation rendering it more resistant to degradation, explaining its slower degradation. This chain is NF-kappa-B inhibitor beta (Nfkbib), found in Mus musculus (Mouse).